The sequence spans 464 residues: Dihydrolipoyllysine-residue succinyltransferase component of 2-oxoglutarate dehydrogenase complex 1, mitochondrial (464 aa).

The transit peptide at 1-86 directs the protein to the mitochondrion; sequence MMLRAVFRRA…TALQRWVRPF (86 aa). Residues 93 to 168 form the Lipoyl-binding domain; sequence VVEAVVPHMG…EPGNKVARIS (76 aa). At lysine 134 the chain carries N6-lipoyllysine. Residues 168–242 form a disordered region; that stretch reads STSADAVSHV…DRERRVPMTR (75 aa). A compositionally biased stretch (basic and acidic residues) spans 196-210; the sequence is EKPKVESTKVAEKPK. A compositionally biased stretch (pro residues) spans 211–220; it reads APSPPPPPPS. Catalysis depends on residues histidine 435 and aspartate 439.

It belongs to the 2-oxoacid dehydrogenase family. As to quaternary structure, forms a 24-polypeptide structural core with octahedral symmetry. The cofactor is (R)-lipoate.

It localises to the mitochondrion. The enzyme catalyses N(6)-[(R)-dihydrolipoyl]-L-lysyl-[protein] + succinyl-CoA = N(6)-[(R)-S(8)-succinyldihydrolipoyl]-L-lysyl-[protein] + CoA. It participates in amino-acid degradation; L-lysine degradation via saccharopine pathway; glutaryl-CoA from L-lysine: step 6/6. Functionally, the 2-oxoglutarate dehydrogenase complex catalyzes the overall conversion of 2-oxoglutarate to succinyl-CoA and CO(2). It contains multiple copies of three enzymatic components: 2-oxoglutarate dehydrogenase (E1), dihydrolipoamide succinyltransferase (E2) and lipoamide dehydrogenase (E3). This is Dihydrolipoyllysine-residue succinyltransferase component of 2-oxoglutarate dehydrogenase complex 1, mitochondrial from Arabidopsis thaliana (Mouse-ear cress).